A 1584-amino-acid chain; its full sequence is Sterile alpha motif domain-containing protein 9-like (1584 aa).

An SAM domain is found at 14–79 (WTKEHVKKWV…RSYNKLNSKS (66 aa)). Residues 76 to 122 (NSKSPESDNHDPGQLDNSKPSKTEHQKNPKHTKKEEENSMSSNIDYD) form a disordered region. The segment covering 80 to 112 (PESDNHDPGQLDNSKPSKTEHQKNPKHTKKEEE) has biased composition (basic and acidic residues).

As to quaternary structure, interacts with EEA1. As to expression, widely expressed in adult and fetal tissues. Expressed in the cerebellum. Variable expression in tumors. Down-regulated in breast cancer.

Its subcellular location is the early endosome. The protein resides in the mitochondrion. In terms of biological role, may be involved in endosome fusion. Mediates down-regulation of growth factor signaling via internalization of growth factor receptors. This is Sterile alpha motif domain-containing protein 9-like (SAMD9L) from Homo sapiens (Human).